We begin with the raw amino-acid sequence, 262 residues long: Transcription factor of morphogenesis MCM1 (262 aa).

Disordered stretches follow at residues 1-62 (MAIK…ERRK) and 140-262 (EEGL…QQYQ). Residues 17-35 (NSHSTNNNNNSNNSNSNNN) are compositionally biased toward low complexity. In terms of domain architecture, MADS-box spans 58 to 118 (KERRKIEIKF…GLVYTFTTPK (61 aa)). Over residues 150-170 (QSDGNTGDSPDQSPAPATNPN) the composition is skewed to polar residues. 3 stretches are compositionally biased toward low complexity: residues 182–198 (QQQQ…AQQQ), 224–239 (PQQQ…LQGG), and 249–262 (NIQN…QQYQ).

As to quaternary structure, interacts with AHR1.

Its subcellular location is the nucleus. Functionally, transcription factor that is recruited by AHR1 to the promoters of genes involved in biofilm formation, which include several key adhesion genes. Plays an important role in cell adhesion, hyphal growth and virulence. Implicated in the regulation of opaque-phase-specific gene expression. This chain is Transcription factor of morphogenesis MCM1 (MCM1), found in Candida albicans (strain SC5314 / ATCC MYA-2876) (Yeast).